A 151-amino-acid chain; its full sequence is MVKAICVVKGAVVNGTIIFSQENEGSPVYVNGTISGLSGGLHGFHIHEFGDTSNGCLSAGAHFNPFHVEHGGPNSAIRHVGDLGNITSCPSSKVANVLIQDNVISLFGDLSIIGRTLVVHENQDDLGLGGNLSKTTGNAGARVACGILAKI.

Cu cation-binding residues include His45, His47, and His62. Cys56 and Cys145 form a disulfide bridge. Zn(2+)-binding residues include His62, His70, His79, and Asp82. His120 lines the Cu cation pocket.

The protein belongs to the Cu-Zn superoxide dismutase family. In terms of assembly, homodimer. Requires Cu cation as cofactor. Zn(2+) serves as cofactor.

The protein resides in the cytoplasm. The enzyme catalyses 2 superoxide + 2 H(+) = H2O2 + O2. Its function is as follows. Destroys radicals which are normally produced within the cells and which are toxic to biological systems. Protects spores from cellular damage caused by UV LIGHT. The chain is Superoxide dismutase [Cu-Zn] 4 (sodD) from Dictyostelium discoideum (Social amoeba).